A 1362-amino-acid polypeptide reads, in one-letter code: DNA-directed RNA polymerase subunit beta (1362 aa).

The protein belongs to the RNA polymerase beta chain family. In terms of assembly, the RNAP catalytic core consists of 2 alpha, 1 beta, 1 beta' and 1 omega subunit. When a sigma factor is associated with the core the holoenzyme is formed, which can initiate transcription.

The enzyme catalyses RNA(n) + a ribonucleoside 5'-triphosphate = RNA(n+1) + diphosphate. DNA-dependent RNA polymerase catalyzes the transcription of DNA into RNA using the four ribonucleoside triphosphates as substrates. In Parvibaculum lavamentivorans (strain DS-1 / DSM 13023 / NCIMB 13966), this protein is DNA-directed RNA polymerase subunit beta.